The chain runs to 249 residues: 3-deoxy-manno-octulosonate cytidylyltransferase (249 aa).

It belongs to the KdsB family.

The protein localises to the cytoplasm. It catalyses the reaction 3-deoxy-alpha-D-manno-oct-2-ulosonate + CTP = CMP-3-deoxy-beta-D-manno-octulosonate + diphosphate. It participates in nucleotide-sugar biosynthesis; CMP-3-deoxy-D-manno-octulosonate biosynthesis; CMP-3-deoxy-D-manno-octulosonate from 3-deoxy-D-manno-octulosonate and CTP: step 1/1. It functions in the pathway bacterial outer membrane biogenesis; lipopolysaccharide biosynthesis. In terms of biological role, activates KDO (a required 8-carbon sugar) for incorporation into bacterial lipopolysaccharide in Gram-negative bacteria. The polypeptide is 3-deoxy-manno-octulosonate cytidylyltransferase (Serratia proteamaculans (strain 568)).